The chain runs to 545 residues: MSDAFETAAPPHATYDTVLVLDMGSQTSHLILRRLRSLGVYSEMLPCTQKIKDLGWKPVGVILSGGPSSVYADDAPGVDPLVFELGVPVLGVCYGNQLIAWRANPKSVAPGVNREYGETQMAIHKIGTHGDRLFEGLGDSLNVVMSHFDKVVQLPDGFQTIATTKNSEFAGIAHETQPIFGIQFHPEISHTEKGTDIIANFATKICGARPDWKMDDFSAREIKRIRELVGDKAQVIGAVSGGVDSTVAAKLMKEAIGDRFHAILVDQGLMRLNECEQVKETLDKHLGINLTVVDGSELFLGRLAGVTEPEAKRKIIGGTFIDLFEIEALRIEKEAENTDRAGKVEWFLQGTLYADIVESLSFKGAASSTIKSHHNAGGLPARMQNGEAQLKLLEPLRELFKDEVRAFGRQLGIHEELIGRHPFPGPGLGIRIIGEVTPERVEIVRKADHIFISMIREAGIYDEVTQAYAALDSSRAVGVQGDARVYGYICILRAVTSLDMMSAEPYEFTWSLMKAISRRIVNEVDGIARVVYDTTSKPPGTIELE.

A Glutamine amidotransferase type-1 domain is found at 17-211; sequence TVLVLDMGSQ…ATKICGARPD (195 aa). C93 serves as the catalytic Nucleophile. Catalysis depends on residues H185 and E187. One can recognise a GMPS ATP-PPase domain in the interval 212–420; sequence WKMDDFSARE…LGIHEELIGR (209 aa). 240–246 lines the ATP pocket; that stretch reads SGGVDST. Residues R313, D482, K537, and E543 each contribute to the XMP site.

Homodimer. Mg(2+) is required as a cofactor.

It is found in the cytoplasm. The protein localises to the cytosol. It carries out the reaction XMP + L-glutamine + ATP + H2O = GMP + L-glutamate + AMP + diphosphate + 2 H(+). Its pathway is purine metabolism; GMP biosynthesis; GMP from XMP (L-Gln route): step 1/1. In terms of biological role, catalyzes the conversion of xanthine monophosphate (XMP) to GMP in the presence of glutamine and ATP through an adenyl-XMP intermediate. This is GMP synthase [glutamine-hydrolyzing] (GUA1) from Gibberella zeae (strain ATCC MYA-4620 / CBS 123657 / FGSC 9075 / NRRL 31084 / PH-1) (Wheat head blight fungus).